Here is a 101-residue protein sequence, read N- to C-terminus: Large ribosomal subunit protein uL24 (101 aa).

This sequence belongs to the universal ribosomal protein uL24 family. Part of the 50S ribosomal subunit.

Functionally, one of two assembly initiator proteins, it binds directly to the 5'-end of the 23S rRNA, where it nucleates assembly of the 50S subunit. In terms of biological role, one of the proteins that surrounds the polypeptide exit tunnel on the outside of the subunit. The chain is Large ribosomal subunit protein uL24 from Borreliella burgdorferi (strain ATCC 35210 / DSM 4680 / CIP 102532 / B31) (Borrelia burgdorferi).